Here is a 248-residue protein sequence, read N- to C-terminus: PF03932 family protein CutC (248 aa).

It belongs to the CutC family. In terms of assembly, homodimer.

It is found in the cytoplasm. The protein is PF03932 family protein CutC of Shigella boydii serotype 4 (strain Sb227).